The chain runs to 510 residues: Arginine biosynthesis bifunctional protein ArgJ, chloroplastic (510 aa).

Substrate-binding residues include Thr223, Lys249, Glu359, Asn505, and Thr510.

Belongs to the ArgJ family. In terms of assembly, heterodimer of an alpha and a beta chain.

It localises to the plastid. The protein localises to the chloroplast. The enzyme catalyses N(2)-acetyl-L-ornithine + L-glutamate = N-acetyl-L-glutamate + L-ornithine. The catalysed reaction is L-glutamate + acetyl-CoA = N-acetyl-L-glutamate + CoA + H(+). The protein operates within amino-acid biosynthesis; L-arginine biosynthesis; L-ornithine and N-acetyl-L-glutamate from L-glutamate and N(2)-acetyl-L-ornithine (cyclic): step 1/1. Its pathway is amino-acid biosynthesis; L-arginine biosynthesis; N(2)-acetyl-L-ornithine from L-glutamate: step 1/4. Functionally, catalyzes two activities which are involved in the cyclic version of arginine biosynthesis: the synthesis of acetylglutamate from glutamate and acetyl-CoA, and of ornithine by transacetylation between acetylornithine and glutamate. In Vitis vinifera (Grape), this protein is Arginine biosynthesis bifunctional protein ArgJ, chloroplastic.